The sequence spans 126 residues: Large ribosomal subunit protein bL17 (126 aa).

This sequence belongs to the bacterial ribosomal protein bL17 family. In terms of assembly, part of the 50S ribosomal subunit. Contacts protein L32.

In Xylella fastidiosa (strain M12), this protein is Large ribosomal subunit protein bL17.